The primary structure comprises 446 residues: Deoxyguanosinetriphosphate triphosphohydrolase-like protein (446 aa).

Residues 1–28 form a disordered region; that stretch reads MSSSVWQERRHGEDKQRRNDHRSPFQRD. Positions 7–28 are enriched in basic and acidic residues; sequence QERRHGEDKQRRNDHRSPFQRD. The 194-residue stretch at 59–252 folds into the HD domain; it reads RLTHSLEVSQ…MELADDIAYA (194 aa).

The protein belongs to the dGTPase family. Type 2 subfamily.

The sequence is that of Deoxyguanosinetriphosphate triphosphohydrolase-like protein from Shewanella sp. (strain MR-4).